Here is a 270-residue protein sequence, read N- to C-terminus: NFAT activation molecule 1 (270 aa).

Positions Met-1–Gly-42 are cleaved as a signal peptide. The Extracellular portion of the chain corresponds to Gln-43–Lys-163. One can recognise an Ig-like V-type domain in the interval Leu-50–Arg-150. A disulfide bridge links Cys-65 with Cys-114. The N-linked (GlcNAc...) asparagine glycan is linked to Asn-107. A helical transmembrane segment spans residues Leu-164–Leu-184. The Cytoplasmic portion of the chain corresponds to Leu-185–Leu-270. The interval Arg-190–Val-219 is disordered. Basic and acidic residues predominate over residues Pro-194–Asp-204. The segment covering Ser-207–Val-219 has biased composition (polar residues). Residues Ser-209–Glu-237 form the ITAM domain. Phosphotyrosine occurs at positions 220 and 231. The tract at residues Ile-234–Glu-262 is disordered. Positions Gly-239 to Ser-250 are enriched in polar residues.

In terms of assembly, no direct interaction with the B-cell antigen receptor (BCR). Interacts with SYK; probably involved in BCR signaling. Interacts with ZAP70. N-glycosylated. Highly expressed in neutrophils, primary monocytes, mast cells, monocytic cell lines and lymphocytes. Also expressed in spleen B and T-cells, and lung. Expressed at low level in non-immune tissue.

The protein resides in the cell membrane. Its function is as follows. May function in immune system as a receptor which activates via the calcineurin/NFAT-signaling pathway the downstream cytokine gene promoters. Activates the transcription of IL-13 and TNF-alpha promoters. May be involved in the regulation of B-cell, but not T-cell, development. Overexpression activates downstream effectors without ligand binding or antibody cross-linking. This chain is NFAT activation molecule 1 (NFAM1), found in Homo sapiens (Human).